Consider the following 298-residue polypeptide: Small ribosomal subunit biogenesis GTPase RsgA (298 aa).

A CP-type G domain is found at 67–228; that stretch reads TNELIRPPIC…VADTPGFSSL (162 aa). 116 to 119 is a GTP binding site; it reads TKMD. Residue T166 is modified to Phosphothreonine. 171–179 lines the GTP pocket; that stretch reads GQSGVGKSS. Residues C252, C257, H259, and C265 each contribute to the Zn(2+) site.

Belongs to the TRAFAC class YlqF/YawG GTPase family. RsgA subfamily. Monomer, but able to form dimers. Associates with 30S ribosomal subunit; a phospho-mimetic mutation increases association. Probably binds 16S rRNA. Zn(2+) is required as a cofactor. In terms of processing, in vitro phosphorylated mostly on Thr (with lower signal on Ser) by PrkC in the presence of poly-L-Lys or myelin basic protein, dephosphorylated by PrpC. Most in vitro phosphorylation occurs on Thr-166, in vivo phosphorylation has not been detected, but it might vary during the cell cycle.

Its subcellular location is the cytoplasm. Functionally, one of several proteins that assist in the late maturation steps of the functional core of the 30S ribosomal subunit. Helps release RbfA from mature subunits. May play a role in the assembly of ribosomal proteins into the subunit. Circularly permuted GTPase with a low level of activity and slow catalytic turnover, does not act on ATP. GTPase activity is stimulated by the presence of 30S or 70S ribosomes, phosphorylation increases stimulation. Depletion results in increased sensitivity to protein synthesis inhibitors that block the peptide channel or peptidyl transferase center on the ribosome, suggesting this protein functions in conjunction with the ribosome in vivo. Decreasing levels of protein lead to an increase in free 30S and 50S ribosomal subunits and a decrease in assembled 70S ribosomes. Suggested to serve as a specific transcription factor for proteins involved in late stages of peptidoglycan synthesis. This is Small ribosomal subunit biogenesis GTPase RsgA from Bacillus subtilis (strain 168).